A 237-amino-acid polypeptide reads, in one-letter code: 2,3-bisphosphoglycerate-dependent phosphoglycerate mutase (237 aa).

Substrate-binding positions include 8–15 (RHGQSQWN), 21–22 (TG), R60, 87–90 (ERHY), K98, 114–115 (RR), and 180–181 (GN). Catalysis depends on H9, which acts as the Tele-phosphohistidine intermediate. The Proton donor/acceptor role is filled by E87.

Belongs to the phosphoglycerate mutase family. BPG-dependent PGAM subfamily. Homodimer.

It catalyses the reaction (2R)-2-phosphoglycerate = (2R)-3-phosphoglycerate. It participates in carbohydrate degradation; glycolysis; pyruvate from D-glyceraldehyde 3-phosphate: step 3/5. Functionally, catalyzes the interconversion of 2-phosphoglycerate and 3-phosphoglycerate. The sequence is that of 2,3-bisphosphoglycerate-dependent phosphoglycerate mutase from Caulobacter vibrioides (strain ATCC 19089 / CIP 103742 / CB 15) (Caulobacter crescentus).